A 377-amino-acid chain; its full sequence is tRNA-specific 2-thiouridylase MnmA (377 aa).

Residues 12-19 and Met38 each bind ATP; that span reads GMSGGVDS. Residues 98 to 100 are interaction with target base in tRNA; sequence NPD. The active-site Nucleophile is the Cys103. A disulfide bridge connects residues Cys103 and Cys200. Gly127 contacts ATP. Residues 150 to 152 form an interaction with tRNA region; the sequence is KDQ. Cys200 functions as the Cysteine persulfide intermediate in the catalytic mechanism. Residues 314-315 are interaction with tRNA; sequence RY.

It belongs to the MnmA/TRMU family.

It is found in the cytoplasm. The catalysed reaction is S-sulfanyl-L-cysteinyl-[protein] + uridine(34) in tRNA + AH2 + ATP = 2-thiouridine(34) in tRNA + L-cysteinyl-[protein] + A + AMP + diphosphate + H(+). Functionally, catalyzes the 2-thiolation of uridine at the wobble position (U34) of tRNA, leading to the formation of s(2)U34. This chain is tRNA-specific 2-thiouridylase MnmA, found in Limosilactobacillus reuteri (strain DSM 20016) (Lactobacillus reuteri).